An 89-amino-acid polypeptide reads, in one-letter code: MIGSLKFNFILFLLISTMHMFWCHPISSSKVPGKSDYFVILLNSCPTRMDRRVGLDFLKPILEKTLMKRSFRNGVGTGMKKTSFRRAKS.

The N-terminal stretch at 1–23 (MIGSLKFNFILFLLISTMHMFWC) is a signal peptide. Positions 24-67 (HPISSSKVPGKSDYFVILLNSCPTRMDRRVGLDFLKPILEKTLM) are excised as a propeptide.

Its subcellular location is the secreted. In terms of biological role, modulates arousal and anxiety. May play an important anorexigenic role. Binds to its receptor NPSR1 with nanomolar affinity to increase intracellular calcium concentrations. In Bos taurus (Bovine), this protein is Neuropeptide S (NPS).